Consider the following 299-residue polypeptide: 4-diphosphocytidyl-2-C-methyl-D-erythritol kinase (299 aa).

Residue K11 is part of the active site. 94–104 lines the ATP pocket; the sequence is PQGGGLGGGSS. D136 is an active-site residue.

Belongs to the GHMP kinase family. IspE subfamily.

It carries out the reaction 4-CDP-2-C-methyl-D-erythritol + ATP = 4-CDP-2-C-methyl-D-erythritol 2-phosphate + ADP + H(+). It participates in isoprenoid biosynthesis; isopentenyl diphosphate biosynthesis via DXP pathway; isopentenyl diphosphate from 1-deoxy-D-xylulose 5-phosphate: step 3/6. In terms of biological role, catalyzes the phosphorylation of the position 2 hydroxy group of 4-diphosphocytidyl-2C-methyl-D-erythritol. In Bordetella bronchiseptica (strain ATCC BAA-588 / NCTC 13252 / RB50) (Alcaligenes bronchisepticus), this protein is 4-diphosphocytidyl-2-C-methyl-D-erythritol kinase.